A 168-amino-acid polypeptide reads, in one-letter code: NADH-quinone oxidoreductase subunit I (168 aa).

4Fe-4S ferredoxin-type domains are found at residues 58-88 and 99-128; these read LRTYKNGEERCIACKLCEAICPAQAITIEAQ and VRYDIDMTKCIYCGFCQEACPVDAIVEGPN. [4Fe-4S] cluster contacts are provided by C68, C71, C74, C78, C108, C111, C114, and C118.

It belongs to the complex I 23 kDa subunit family. As to quaternary structure, NDH-1 is composed of 14 different subunits. Subunits NuoA, H, J, K, L, M, N constitute the membrane sector of the complex. [4Fe-4S] cluster is required as a cofactor.

Its subcellular location is the cell inner membrane. The enzyme catalyses a quinone + NADH + 5 H(+)(in) = a quinol + NAD(+) + 4 H(+)(out). NDH-1 shuttles electrons from NADH, via FMN and iron-sulfur (Fe-S) centers, to quinones in the respiratory chain. The immediate electron acceptor for the enzyme in this species is believed to be ubiquinone. Couples the redox reaction to proton translocation (for every two electrons transferred, four hydrogen ions are translocated across the cytoplasmic membrane), and thus conserves the redox energy in a proton gradient. This Ehrlichia ruminantium (strain Gardel) protein is NADH-quinone oxidoreductase subunit I.